We begin with the raw amino-acid sequence, 832 residues long: Translation initiation factor IF-2 (832 aa).

Basic and acidic residues predominate over residues 1–10; it reads MLMSDVEKFG. Disordered regions lie at residues 1-87, 120-148, and 163-201; these read MLMS…SRSA, RDEE…PAAA, and IAPG…GGGG. Over residues 11–20 the composition is skewed to gly residues; the sequence is GDCGSSGGSG. Polar residues-rich tracts occupy residues 29–42 and 71–87; these read RAST…STGG and SPYT…SRSA. One can recognise a tr-type G domain in the interval 331–500; sequence PRPPVVTVMG…LLLAEMLELR (170 aa). A G1 region spans residues 340 to 347; that stretch reads GHVDHGKT. Residue 340-347 participates in GTP binding; the sequence is GHVDHGKT. Residues 365–369 form a G2 region; the sequence is GITQH. Residues 386–389 form a G3 region; it reads DTPG. GTP-binding positions include 386 to 390 and 440 to 443; these read DTPGH and NKID. The segment at 440-443 is G4; the sequence is NKID. A G5 region spans residues 476–478; sequence SAK.

The protein belongs to the TRAFAC class translation factor GTPase superfamily. Classic translation factor GTPase family. IF-2 subfamily.

Its subcellular location is the cytoplasm. One of the essential components for the initiation of protein synthesis. Protects formylmethionyl-tRNA from spontaneous hydrolysis and promotes its binding to the 30S ribosomal subunits. Also involved in the hydrolysis of GTP during the formation of the 70S ribosomal complex. The polypeptide is Translation initiation factor IF-2 (Anaplasma marginale (strain St. Maries)).